The sequence spans 358 residues: Aminomethyltransferase (358 aa).

It belongs to the GcvT family. In terms of assembly, the glycine cleavage system is composed of four proteins: P, T, L and H.

It carries out the reaction N(6)-[(R)-S(8)-aminomethyldihydrolipoyl]-L-lysyl-[protein] + (6S)-5,6,7,8-tetrahydrofolate = N(6)-[(R)-dihydrolipoyl]-L-lysyl-[protein] + (6R)-5,10-methylene-5,6,7,8-tetrahydrofolate + NH4(+). In terms of biological role, the glycine cleavage system catalyzes the degradation of glycine. In Francisella tularensis subsp. tularensis (strain FSC 198), this protein is Aminomethyltransferase.